Consider the following 479-residue polypeptide: NADH-quinone oxidoreductase subunit N (479 aa).

The next 14 membrane-spanning stretches (helical) occupy residues 3-23 (MLYG…FQLI), 40-60 (IGFA…FNGI), 77-97 (IIIL…IKVA), 102-122 (HSEY…LVSA), 125-145 (FMVM…LTTF), 159-179 (YFIL…LVYG), 200-220 (MAVL…KLSI), 234-254 (APLV…LALL), 268-288 (FFYI…VGAF), 299-319 (FIAY…VANS), 327-347 (ISYF…AIII), 373-393 (SILI…AGFI), 409-429 (ELII…LNIV), and 452-472 (LVSI…MLFG).

This sequence belongs to the complex I subunit 2 family. In terms of assembly, NDH-1 is composed of 14 different subunits. Subunits NuoA, H, J, K, L, M, N constitute the membrane sector of the complex.

The protein resides in the cell inner membrane. The enzyme catalyses a quinone + NADH + 5 H(+)(in) = a quinol + NAD(+) + 4 H(+)(out). In terms of biological role, NDH-1 shuttles electrons from NADH, via FMN and iron-sulfur (Fe-S) centers, to quinones in the respiratory chain. The immediate electron acceptor for the enzyme in this species is believed to be ubiquinone. Couples the redox reaction to proton translocation (for every two electrons transferred, four hydrogen ions are translocated across the cytoplasmic membrane), and thus conserves the redox energy in a proton gradient. The sequence is that of NADH-quinone oxidoreductase subunit N from Orientia tsutsugamushi (strain Ikeda) (Rickettsia tsutsugamushi).